Here is a 403-residue protein sequence, read N- to C-terminus: F-box protein At2g40925 (403 aa).

Positions 21–71 (NRHDCEIPPDLMIEILIRLPTKSFMRFKCVSKQWSPLISGRYFCNRLFTCV) constitute an F-box domain.

The polypeptide is F-box protein At2g40925 (Arabidopsis thaliana (Mouse-ear cress)).